The sequence spans 559 residues: Cytoplasmic polyadenylation element-binding protein 1 (559 aa).

The segment at 223-244 (RLDHSSSPLTPPPSATSSGGLS) is disordered. 2 RRM domains span residues 304-401 (CKVF…DAQV) and 423-504 (NTVF…PYLE). Zn(2+) is bound by residues C508, C511, C520, C525, C530, C533, H538, and H546.

The protein belongs to the RRM CPEB family. As to quaternary structure, interacts with kinesin, dynein, APLP1, APLP2, TENT2/GLD2 and APP. Both phosphorylated and non phosphorylated forms interact with APLP1. Interacts with TENT4B; the interaction is required for TENT4B-mediated translational control.

The protein localises to the cytoplasm. Its function is as follows. Sequence-specific RNA-binding protein that regulates mRNA cytoplasmic polyadenylation and translation initiation during oocyte maturation and early development. Binds to the cytoplasmic polyadenylation element (CPE), an uridine-rich sequence element (consensus sequence 5'-UUUUUAU-3') within the mRNA 3'-UTR. This is Cytoplasmic polyadenylation element-binding protein 1 (cpeb1) from Carassius auratus (Goldfish).